The sequence spans 174 residues: Large ribosomal subunit protein uL10 (174 aa).

This sequence belongs to the universal ribosomal protein uL10 family. In terms of assembly, part of the ribosomal stalk of the 50S ribosomal subunit. The N-terminus interacts with L11 and the large rRNA to form the base of the stalk. The C-terminus forms an elongated spine to which L12 dimers bind in a sequential fashion forming a multimeric L10(L12)X complex.

In terms of biological role, forms part of the ribosomal stalk, playing a central role in the interaction of the ribosome with GTP-bound translation factors. This is Large ribosomal subunit protein uL10 from Geotalea uraniireducens (strain Rf4) (Geobacter uraniireducens).